Here is a 115-residue protein sequence, read N- to C-terminus: U3-lycotoxin-Ls1l (115 aa).

An N-terminal signal peptide occupies residues 1-20; sequence MKFVLLFGVLLVTLFSYSSA. Residues 21–44 constitute a propeptide that is removed on maturation; it reads EMLDDFDQADEDELLSLIEKEEAR. Disulfide bonds link Cys-55-Cys-72, Cys-62-Cys-87, and Cys-74-Cys-85.

It belongs to the neurotoxin 19 (CSTX) family. 01 subfamily. As to expression, expressed by the venom gland.

The protein resides in the secreted. The polypeptide is U3-lycotoxin-Ls1l (Lycosa singoriensis (Wolf spider)).